The primary structure comprises 903 residues: Zinc finger CCCH domain-containing protein 27 (903 aa).

A disordered region spans residues 1 to 144; the sequence is MIKESSSPAL…GRNGAPWAQH (144 aa). A compositionally biased stretch (basic and acidic residues) spans 11-24; it reads DADKIEVPSPKDEN. The segment covering 33-46 has biased composition (acidic residues); it reads TDNEDFEISDDDDD. Over residues 86–96 the composition is skewed to basic and acidic residues; sequence SHGEAQKDFFP. The segment at 225 to 253 adopts a C3H1-type zinc-finger fold; the sequence is GMPRQRCRDFEERGFCLRGDMCPMEHGLN. The segment at 390 to 456 is disordered; that stretch reads ASKKLGHGKT…GRQSNRASHK (67 aa). The span at 397 to 410 shows a compositional bias: low complexity; sequence GKTANATSTSATGN. The segment covering 432 to 441 has biased composition (polar residues); it reads KDSNGQSNSR. One can recognise an RRM domain in the interval 459–531; that stretch reads RTLYVNGIPL…RFIKLWWANR (73 aa). 3 disordered regions span residues 545–609, 642–720, and 826–903; these read KSSH…DTKR, KQKG…QTSP, and TNHS…DVSQ. The segment covering 556–576 has biased composition (polar residues); the sequence is SVPQPSSSNRGKENLQSATPR. Residues 577–587 are compositionally biased toward low complexity; sequence ASSGSSAEASG. Positions 608–649 form a coiled coil; the sequence is KRQESLELLEELRKKQEILAQKRDEFRRQLEKLAKQKGLANS. The span at 693 to 708 shows a compositional bias: low complexity; sequence SGELASSSHKSSATSA. The segment covering 826 to 886 has biased composition (polar residues); that stretch reads TNHSRFQKTS…SMPTATSAKT (61 aa).

This is Zinc finger CCCH domain-containing protein 27 from Oryza sativa subsp. japonica (Rice).